The chain runs to 1035 residues: MTMEHGEDCCVKVAVHVRPLIGDEKLQGCKDCVSVVSGKPQVQIGSHSFTFDHVYGSSGTPSAAMFEECVAPLVDGLFQGYNATVLAYGQTGSGKTYTMGTACKEGSHIGIIPRAMATLFDKIDKLKNQVEFQLRVSFIEILKEEVRDLLDPATAAVGKLENGNGHATKLSVPGKPPVQIREASNGVITLAGSTEVHVTTQKEMTACLEQGSLSRATGSTNMNNQSSRSHAIFTITLEQMRKADPIMTLDGMPIEEMNEDYLCAKLHLVDLAGSERAKRTGSDGLRFKEGVHINRGLLALGNVISALGDEKKRKEGAHVPYRDSKLTRLLQDSLGGNSKTVMIACISPADINAEETLNTLKYANRARNIQNKPIVNRNPVADEMKRMRQQIEYLQAELVSARGGVVLDDVQGLRERISMLEQKNEDLCRELYDLRNHGYTDPCEPELQKIGTGYTKGEGLKRSLQSTEPFDVPMTDSVRAGSPKDIDDEVAKEWEHTMLQDSMGKELNELNRQLEQKESEMKMYGSDTVALKQHFGKKLLELEEEKRAVQQERDRLLAEVESLNADGQTHKLRDAQLQKLKTLEAQILDLKKKQENQVQLLKEKQKSDEAAKKLQEEIHSIKAQKVQLQHKIKQEAEQFRQWKATREKELLQLRKEGRRNEYERHKLQALNQRQKLVLQRKTEEAAMATKRLKELLEARKSSGRDNSGMNGTSPGSHMTEKSLQKWLEQDLEVMVHVHEVRNEYEKQSQLRAALGEELAILKQEDVMSGAASPPRGKNGNSRANTLSPNARQARIASLESMVTISSNTLVAMASQLSEAEERERAFSGRGRWNQLRSMAEAKSLLQYIFNVAADARCQVREKEMEIKEMKEQMTELVTILRHSESRRRETEKQLKQREQAAVTATTSPGNGNGSVKHSADDSNTPLSPVAVPAQKQLKYSAGIVNSPSKGVPAFNKQHLKMVPMAQLPVGKKVSIAGQSGKLWRWKRSHHQWLLQFKWKWQKPWKLSEMIRHSDETMTRTRPRPQLLPHRPQRVM.

One can recognise a Kinesin motor domain in the interval C10–I369. Residue G89–T96 coordinates ATP. Coiled-coil stretches lie at residues V380–H437 and M498–S702. Disordered regions lie at residues E697–E720, V766–S787, and H882–P928. 2 stretches are compositionally biased toward polar residues: residues R704–S716 and N778–S787. Positions N850–A904 form a coiled coil. Over residues H882–E898 the composition is skewed to basic and acidic residues. Residues V902 to L926 are compositionally biased toward polar residues. The Nuclear localization signal motif lies at K971–R987. The tract at residues D1014–M1035 is disordered.

It belongs to the TRAFAC class myosin-kinesin ATPase superfamily. Kinesin family. KIN-4 subfamily. As to quaternary structure, homodimer. As to expression, expressed in young tissues with cell divisions, including initiating adventitious roots, primary root tips, flower primordia, intercalary meristems, sub-epidermal regions of young culms and panicles.

It is found in the nucleus. Its subcellular location is the cytoplasm. The protein resides in the cytoskeleton. Its activity is regulated as follows. May be regulated by cyclin-dependent kinase A. In terms of biological role, microtubule-dependent motor protein involved in the control of the oriented deposition of cellulose microfibrils. Involved in wall biogenesis and modification, and contributes to cell-cycle progression and cell division. Acts as a transcriptional activator in gibberellic acid (GA) biosynthesis pathway. Binds specifically to the DNA sequence 5'-ACCAACTTGAA-3' of the ent-kaurene oxidase 2 (CYP701A6 or OsKO2) promoter. May regulate CYP701A6 gene expression and mediates cell elongation by regulating the GA biosynthesis pathway. The chain is Kinesin-like protein KIN-4A from Oryza sativa subsp. japonica (Rice).